A 444-amino-acid chain; its full sequence is N-succinylarginine dihydrolase (444 aa).

Substrate-binding positions include 19–28 (SGLSFGNVAS), asparagine 110, and 137–138 (HR). Residue glutamate 174 is part of the active site. Arginine 214 contributes to the substrate binding site. Residue histidine 250 is part of the active site. Residues aspartate 252 and asparagine 362 each coordinate substrate. Cysteine 368 (nucleophile) is an active-site residue.

Belongs to the succinylarginine dihydrolase family. As to quaternary structure, homodimer.

It carries out the reaction N(2)-succinyl-L-arginine + 2 H2O + 2 H(+) = N(2)-succinyl-L-ornithine + 2 NH4(+) + CO2. It functions in the pathway amino-acid degradation; L-arginine degradation via AST pathway; L-glutamate and succinate from L-arginine: step 2/5. Functionally, catalyzes the hydrolysis of N(2)-succinylarginine into N(2)-succinylornithine, ammonia and CO(2). This chain is N-succinylarginine dihydrolase, found in Photobacterium profundum (strain SS9).